The chain runs to 244 residues: MSSGLYLYGIFPDPIPETVTLQGLDSQLVYSQIIDGFTFLYSEAKQEKYLASRRNLISHEKVLEQAMHAGFRTLLPLRFGLVVKNWETVVTQLLQPYKAQLRELFQKLAGRREVSVKIFWDSKAELQAMMDSHQDLKQKRDQMEGKALSMEEVIHIGQLIESNLLSRKESIIQVFFDELKPLADEVIESDPMTEDMIYNAAFLIPWENESIFSQQVESIDHKFDERLRIRYNNFTAPYTFAQIS.

Belongs to the gas vesicle GvpF/GvpL family. Binds GvpA.

It localises to the gas vesicle. A minor component of the gas vesicle, may be involved in preventing GvpA aggregation during gas vesicle nucleation. Gas vesicles (GV) are hollow, gas filled proteinaceous nanostructures. During planktonic growth they allow positioning of the organism at a favorable depth for light or nutrient acquisition. In terms of biological role, cluster expression in E.coli (gvpA1-gvpA2-gvpC-gvpN-gvpJ-gvpK-gvpF-gvpG-gvpV-gvpW) allows cells to float and produces irregularly shaped gas vesicles. The polypeptide is Gas vesicle protein F (Nostoc sp. (strain PCC 7120 / SAG 25.82 / UTEX 2576)).